A 659-amino-acid polypeptide reads, in one-letter code: Protein NEDD1 (659 aa).

8 WD repeats span residues Met1–His31, Thr32–Leu71, Gly75–Ser114, Asp117–Pro156, Gly160–Asn200, Thr204–Thr244, Val246–Lys285, and Ala289–Gly332. Thr382 is subject to Phosphothreonine; by PLK1. Positions Leu383–Leu433 are disordered. Position 411 is a phosphoserine (Ser411). Positions Val413–Gly432 are enriched in basic and acidic residues. Ser426 is subject to Phosphoserine; by PLK1. Residues Ser468 and Ser515 each carry the phosphoserine modification. Over residues Glu508–Arg522 the composition is skewed to polar residues. The segment at Glu508–Glu531 is disordered. Residue Thr549 is modified to Phosphothreonine; by CDK1. Residue Ser636 is modified to Phosphoserine; by PLK1.

In terms of assembly, interacts with FAM29A. Interacts with HSPA1A and HSPA1B. Interacts with gamma-tubulin in a HSPA1A/B-dependent manner. During mitosis, prior phosphorylation on Thr-549 by CDK1 promotes subsequent phosphorylation by PLK1 on Thr-382, Ser-426 and Ser-636. Phosphorylated NEDD1 can interact with gamma-tubulin for targeting the gamma-tubulin ring complex (gTuRC) to the centrosome, an important step for spindle formation.

The protein localises to the cytoplasm. It is found in the cytoskeleton. The protein resides in the microtubule organizing center. It localises to the centrosome. Required for mitosis progression. Promotes the nucleation of microtubules from the spindle. The sequence is that of Protein NEDD1 (NEDD1) from Bos taurus (Bovine).